Consider the following 1524-residue polypeptide: DNA-directed RNA polymerase subunit beta' (1524 aa).

Residues C58, C60, C73, and C76 each coordinate Zn(2+). The Mg(2+) site is built by D739, D741, and D743. Residues C1112, C1194, C1201, and C1204 each contribute to the Zn(2+) site. The disordered stretch occupies residues 1502–1524 (AVEAKEKEAPRRPVRREQPGKGL).

The protein belongs to the RNA polymerase beta' chain family. In terms of assembly, the RNAP catalytic core consists of 2 alpha, 1 beta, 1 beta' and 1 omega subunit. When a sigma factor is associated with the core the holoenzyme is formed, which can initiate transcription. Mg(2+) serves as cofactor. The cofactor is Zn(2+).

The enzyme catalyses RNA(n) + a ribonucleoside 5'-triphosphate = RNA(n+1) + diphosphate. Its function is as follows. DNA-dependent RNA polymerase catalyzes the transcription of DNA into RNA using the four ribonucleoside triphosphates as substrates. In Thermus aquaticus, this protein is DNA-directed RNA polymerase subunit beta'.